We begin with the raw amino-acid sequence, 464 residues long: MSTDKTNQSWGGRFSEPVDAFVARFTASVTFDQRLYRHDIMGSIAHATMLAKVGVLTDAERDTIVDGLNTIQAEIEAGNFEWRVDLEDVHMNIEARLTDRIGITGKKLHTGRSRNDQVATDIRLWLRDEIDLILSEITRLQQGLLGQAEREAETIMPGFTHLQTAQPVTFGHHMLAWFEMLSRDYERLVDCRKRLNRMPLGSAALAGTTYPIDRELTCKLLGFDVVGGNSLDGVSDRDFAIEFCSAASIAMMHLSRFSEELVLWTSAQFQFIDLPDRFCTGSSIMPQKKNPDVPELVRGKSGRVFGALMGLLTLMKGQPLAYNKDNQEDKEPLFDAADTLRDSLRAFADMIPAIKPRHAIMREAALRGFSTATDLADYLVRRGLPFRDCHEIVGHAVKYGVETGKDLAEMSLEELRQFSNQIEQDVFAVLTLEGSVNARNHIGGTAPEQVRAAVVRGQELLAGR.

This sequence belongs to the lyase 1 family. Argininosuccinate lyase subfamily.

The protein localises to the cytoplasm. The catalysed reaction is 2-(N(omega)-L-arginino)succinate = fumarate + L-arginine. It participates in amino-acid biosynthesis; L-arginine biosynthesis; L-arginine from L-ornithine and carbamoyl phosphate: step 3/3. This chain is Argininosuccinate lyase, found in Pseudomonas savastanoi pv. phaseolicola (strain 1448A / Race 6) (Pseudomonas syringae pv. phaseolicola (strain 1448A / Race 6)).